The following is a 223-amino-acid chain: GTP cyclohydrolase 1 (223 aa).

3 residues coordinate Zn(2+): C114, H117, and C185.

The protein belongs to the GTP cyclohydrolase I family. As to quaternary structure, homomer.

The enzyme catalyses GTP + H2O = 7,8-dihydroneopterin 3'-triphosphate + formate + H(+). It participates in cofactor biosynthesis; 7,8-dihydroneopterin triphosphate biosynthesis; 7,8-dihydroneopterin triphosphate from GTP: step 1/1. The sequence is that of GTP cyclohydrolase 1 from Chlorobium phaeovibrioides (strain DSM 265 / 1930) (Prosthecochloris vibrioformis (strain DSM 265)).